A 218-amino-acid chain; its full sequence is GTP cyclohydrolase 1 (218 aa).

Zn(2+)-binding residues include Cys-109, His-112, and Cys-180.

The protein belongs to the GTP cyclohydrolase I family. As to quaternary structure, toroid-shaped homodecamer, composed of two pentamers of five dimers.

The enzyme catalyses GTP + H2O = 7,8-dihydroneopterin 3'-triphosphate + formate + H(+). Its pathway is cofactor biosynthesis; 7,8-dihydroneopterin triphosphate biosynthesis; 7,8-dihydroneopterin triphosphate from GTP: step 1/1. This chain is GTP cyclohydrolase 1 (folE), found in Pasteurella multocida (strain Pm70).